A 504-amino-acid chain; its full sequence is Glycerol kinase (504 aa).

Residue Thr-12 participates in ADP binding. ATP is bound by residues Thr-12, Thr-13, and Ser-14. Thr-12 is a sn-glycerol 3-phosphate binding site. Arg-16 lines the ADP pocket. Residues Arg-82, Glu-83, Tyr-134, and Asp-244 each coordinate sn-glycerol 3-phosphate. Glycerol contacts are provided by Arg-82, Glu-83, Tyr-134, Asp-244, and Gln-245. ADP is bound by residues Thr-266 and Gly-309. Thr-266, Gly-309, Gln-313, and Gly-410 together coordinate ATP. 2 residues coordinate ADP: Gly-410 and Asn-414.

Belongs to the FGGY kinase family. As to quaternary structure, homotetramer and homodimer (in equilibrium).

It catalyses the reaction glycerol + ATP = sn-glycerol 3-phosphate + ADP + H(+). Its pathway is polyol metabolism; glycerol degradation via glycerol kinase pathway; sn-glycerol 3-phosphate from glycerol: step 1/1. With respect to regulation, activated by phosphorylation and inhibited by fructose 1,6-bisphosphate (FBP). Functionally, key enzyme in the regulation of glycerol uptake and metabolism. Catalyzes the phosphorylation of glycerol to yield sn-glycerol 3-phosphate. The protein is Glycerol kinase of Alkaliphilus oremlandii (strain OhILAs) (Clostridium oremlandii (strain OhILAs)).